The primary structure comprises 239 residues: Sensory rhodopsin-2 (239 aa).

The Extracellular segment spans residues 1 to 3 (MVG). A helical membrane pass occupies residues 4 to 25 (LTTLFWLGAIGMLVGTLAFAWA). Residues 26–33 (GRDAGSGE) are Cytoplasmic-facing. Residues 34–55 (RRYYVTLVGISGIAAVAYVVMA) traverse the membrane as a helical segment. The Extracellular portion of the chain corresponds to 56–69 (LGVGWVPVAERTVF). Residues 70-91 (APRYIDWILTTPLIVYFLGLLA) traverse the membrane as a helical segment. The Cytoplasmic segment spans residues 92 to 94 (GLD). The helical transmembrane segment at 95–117 (SREFGIVITLNTVVMLAGFAGAM) threads the bilayer. The Extracellular portion of the chain corresponds to 118-121 (VPGI). A helical membrane pass occupies residues 122 to 149 (ERYALFGMGAVAFLGLVYYLVGPMTESA). Residues 150–153 (SQRS) lie on the Cytoplasmic side of the membrane. The chain crosses the membrane as a helical span at residues 154-181 (SGIKSLYVRLRNLTVILWAIYPFIWLLG). Over 182–189 (PPGVALLT) the chain is Extracellular. A helical membrane pass occupies residues 190 to 222 (PTVDVALIVYLDLVTKVGFGFIALDAAATLRAE). Residue Lys205 is modified to N6-(retinylidene)lysine. At 223-239 (HGESLAGVDTDAPAVAD) the chain is on the cytoplasmic side.

The protein belongs to the archaeal/bacterial/fungal opsin family. In terms of assembly, homodimer. Interacts with HTR-II.

The protein resides in the cell membrane. Photophobic photoreceptor responsible for the negative phototaxis. Activates the sensory rhodopsin II transducer (HTR-II) in response to blue light. This chain is Sensory rhodopsin-2 (sop2), found in Natronomonas pharaonis (Natronobacterium pharaonis).